Reading from the N-terminus, the 132-residue chain is Agouti-signaling protein (132 aa).

The signal sequence occupies residues 1-22 (MDVTRLLLATLLVFLCFFTAYS). An N-linked (GlcNAc...) asparagine glycan is attached at Asn39. Residues 62 to 88 (ISRKEAEKKRSSKKEASMKKVARPRTP) form a disordered region. Positions 63-79 (SRKEAEKKRSSKKEASM) are enriched in basic and acidic residues. 5 disulfide bridges follow: Cys93/Cys108, Cys100/Cys114, Cys107/Cys125, Cys111/Cys132, and Cys116/Cys123. One can recognise an Agouti domain in the interval 93 to 132 (CVATRDSCKPPAPACCDPCASCQCRFFRSACSCRVLSLNC).

The protein resides in the secreted. Functionally, involved in the regulation of melanogenesis. The binding of ASP to MC1R precludes alpha-MSH initiated signaling and thus blocks production of cAMP, leading to a down-regulation of eumelanogenesis (brown/black pigment) and thus increasing synthesis of pheomelanin (yellow/red pigment). In Macaca radiata (Bonnet macaque), this protein is Agouti-signaling protein (ASIP).